The sequence spans 184 residues: TATA-box-binding protein (184 aa).

2 repeat units span residues 9–85 (IENI…IDKL) and 100–178 (VQNI…KKEL).

Belongs to the TBP family.

General factor that plays a role in the activation of archaeal genes transcribed by RNA polymerase. Binds specifically to the TATA box promoter element which lies close to the position of transcription initiation. The polypeptide is TATA-box-binding protein (tbp) (Thermoplasma acidophilum (strain ATCC 25905 / DSM 1728 / JCM 9062 / NBRC 15155 / AMRC-C165)).